The chain runs to 2326 residues: Chondroitin sulfate proteoglycan 4 (2326 aa).

The signal sequence occupies residues 1–29 (MLLSPGHPLSAPALALILTLALLVRSTAP). Laminin G-like domains are found at residues 30–193 (ASFF…HEGC) and 203–381 (VGLG…AAGC). The segment at 30-640 (ASFFGENHLE…HRGGPAQDLT (611 aa)) is globular or compact configuration stabilized by disulfide bonds. The tract at residues 30–640 (ASFFGENHLE…HRGGPAQDLT (611 aa)) is neurite growth inhibition. Over 30-2225 (ASFFGENHLE…SGFLGFLEAN (2196 aa)) the chain is Extracellular. Residue asparagine 130 is glycosylated (N-linked (GlcNAc...) asparagine). A disulfide bridge connects residues cysteine 170 and cysteine 193. N-linked (GlcNAc...) asparagine glycosylation is present at asparagine 349. A disulfide bond links cysteine 355 and cysteine 381. Asparagine 428 is a glycosylation site (N-linked (GlcNAc...) asparagine). 3 CSPG repeats span residues 429-524 (FTQL…LEVS), 554-646 (PRIV…VSDG), and 663-765 (AIQI…LEVQ). The interaction with COL6A2 stretch occupies residues 575 to 1044 (GPEIFQAYDP…RGGQRLLTTD (470 aa)). An interaction with COL5A1 region spans residues 632 to 1450 (RGGPAQDLTF…SETQTDGFIL (819 aa)). N-linked (GlcNAc...) asparagine glycosylation is found at asparagine 686 and asparagine 773. CSPG repeat units follow at residues 784-882 (TVWM…FRVT) and 902-993 (NAPV…FVAT). A glycan (O-linked (Xyl...) (chondroitin sulfate) serine) is linked at serine 999. CSPG repeat units lie at residues 1022–1114 (APVQ…VSDG), 1130–1220 (YLHV…LSVA), 1242–1341 (PLQL…LDVA), 1360–1453 (TVIP…LLAN), 1477–1567 (PPVI…LSDG), 1585–1683 (LLSL…LLLS), 1708–1807 (PSRL…FRAH), 1836–1928 (PPQP…MSDG), and 1945–2033 (TIEV…VLAL). N-linked (GlcNAc...) asparagine glycosylation is found at asparagine 1135 and asparagine 1206. N-linked (GlcNAc...) asparagine glycans are attached at residues asparagine 1368 and asparagine 1453. The segment at 1590–2225 (GSRKLTVCPE…SGFLGFLEAN (636 aa)) is neurite growth inhibition. The segment at 1591–2225 (SRKLTVCPES…SGFLGFLEAN (635 aa)) is cysteine-containing. Residue asparagine 1649 is glycosylated (N-linked (GlcNAc...) asparagine). Asparagine 1913, asparagine 2020, asparagine 2038, asparagine 2044, and asparagine 2079 each carry an N-linked (GlcNAc...) asparagine glycan. One copy of the CSPG 15 repeat lies at 2042 to 2151 (TVNVTVQALL…TGDRLTLELQ (110 aa)). Positions 2187–2210 (RTETEKTGKSTPTGQPGQAASSPM) are disordered. Polar residues predominate over residues 2195-2210 (KSTPTGQPGQAASSPM). Residues 2226-2250 (MFSVIIPVCLVLLLLALILPLLFYL) form a helical membrane-spanning segment. Over 2251-2326 (RKRNKTGKHD…PALRNGQYWV (76 aa)) the chain is Cytoplasmic. Threonine 2256 is subject to Phosphothreonine; by PKC/PRKCA. Residues 2324-2326 (YWV) carry the PDZ-binding motif.

Interacts with GRIP1, GRIP2 and GRIA2. Forms a ternary complex with GRIP1 and GRIA2. Interacts with ITGA4 through its chondroitin sulfate glycosaminoglycan. Interacts with BCAR1, CDC42 and ACK1. Interacts with MMP16. Interacts with the first PDZ domain of MPDZ. Interacts with PRKCA. Interacts with LGALS3 and the integrin composed of ITGB1 and ITGA3. Binds TNC, laminin-1, COL5A1 and COL6A2. Interacts with PLG and angiostatin. Binds FGF2 and PDGFA. Post-translationally, N-glycosylated. O-glycosylated; contains glycosaminoglycan chondroitin sulfate which are required for proper localization and function in stress fiber formation. Involved in interaction with MMP16 and ITGA4. In terms of processing, phosphorylation by PRKCA regulates its subcellular location and function in cell motility. Neural cells and also extraneural tissues, especially in the developing mesenchyme.

The protein localises to the cell membrane. It localises to the apical cell membrane. It is found in the cell projection. Its subcellular location is the lamellipodium membrane. The protein resides in the cell surface. Proteoglycan playing a role in cell proliferation and migration which stimulates endothelial cells motility during microvascular morphogenesis. May also inhibit neurite outgrowth and growth cone collapse during axon regeneration. Cell surface receptor for collagen alpha 2(VI) which may confer cells ability to migrate on that substrate. Binds through its extracellular N-terminus growth factors, extracellular matrix proteases modulating their activity. May regulate MPP16-dependent degradation and invasion of type I collagen participating in melanoma cells invasion properties. May modulate the plasminogen system by enhancing plasminogen activation and inhibiting angiostatin. Also functions as a signal transducing protein by binding through its cytoplasmic C-terminus scaffolding and signaling proteins. May promote retraction fiber formation and cell polarization through Rho GTPase activation. May stimulate alpha-4, beta-1 integrin-mediated adhesion and spreading by recruiting and activating a signaling cascade through CDC42, ACK1 and BCAR1. May activate FAK and ERK1/ERK2 signaling cascades. The protein is Chondroitin sulfate proteoglycan 4 (Cspg4) of Rattus norvegicus (Rat).